A 102-amino-acid polypeptide reads, in one-letter code: Alpha-hemoglobin-stabilizing protein (102 aa).

This sequence belongs to the AHSP family. In terms of assembly, monomer. Forms a heterodimer with free alpha-hemoglobin. Does not bind beta-hemoglobin nor alpha(2)beta(2) hemoglobin A. As to expression, expressed in spleen, bone marrow, and blood, with highest levels in bone marrow.

The protein localises to the cytoplasm. Functionally, acts as a chaperone to prevent the harmful aggregation of alpha-hemoglobin during normal erythroid cell development. Specifically protects free alpha-hemoglobin from precipitation. The polypeptide is Alpha-hemoglobin-stabilizing protein (Ahsp) (Mus musculus (Mouse)).